Reading from the N-terminus, the 316-residue chain is Transaldolase 2 (316 aa).

Lys-131 acts as the Schiff-base intermediate with substrate in catalysis.

Belongs to the transaldolase family. Type 1 subfamily. As to quaternary structure, homodimer.

The protein resides in the cytoplasm. It carries out the reaction D-sedoheptulose 7-phosphate + D-glyceraldehyde 3-phosphate = D-erythrose 4-phosphate + beta-D-fructose 6-phosphate. It participates in carbohydrate degradation; pentose phosphate pathway; D-glyceraldehyde 3-phosphate and beta-D-fructose 6-phosphate from D-ribose 5-phosphate and D-xylulose 5-phosphate (non-oxidative stage): step 2/3. Functionally, transaldolase is important for the balance of metabolites in the pentose-phosphate pathway. This chain is Transaldolase 2, found in Shigella sonnei (strain Ss046).